Consider the following 166-residue polypeptide: 2S seed storage protein 4 (166 aa).

A signal peptide spans Met-1–Ala-21. 2 propeptides span residues Ser-22–Asn-37 and Gly-73–Asn-88.

It belongs to the 2S seed storage albumins family. The mature protein consists of a small and a large chain linked by disulfide bonds.

In terms of biological role, this is a 2S seed storage protein. The protein is 2S seed storage protein 4 (AT2S4) of Arabidopsis thaliana (Mouse-ear cress).